A 317-amino-acid chain; its full sequence is Protoheme IX farnesyltransferase (317 aa).

Helical transmembrane passes span 25–45 (FFAL…LVGM), 54–74 (PVIA…SGCL), 126–146 (LAAG…SMWL), 154–174 (IVIG…VVTG), 181–201 (LVLF…LALV), 227–244 (IVAY…PVAL), 249–271 (LIYG…QVYH), and 281–301 (AAMG…SALL).

The protein belongs to the UbiA prenyltransferase family. Protoheme IX farnesyltransferase subfamily.

Its subcellular location is the cell inner membrane. The enzyme catalyses heme b + (2E,6E)-farnesyl diphosphate + H2O = Fe(II)-heme o + diphosphate. The protein operates within porphyrin-containing compound metabolism; heme O biosynthesis; heme O from protoheme: step 1/1. Its function is as follows. Converts heme B (protoheme IX) to heme O by substitution of the vinyl group on carbon 2 of heme B porphyrin ring with a hydroxyethyl farnesyl side group. The sequence is that of Protoheme IX farnesyltransferase from Methylobacterium sp. (strain 4-46).